A 463-amino-acid polypeptide reads, in one-letter code: Heterogeneous nuclear ribonucleoprotein K (463 aa).

Met-1 carries the N-acetylmethionine modification. The interval 1-37 (METEQPEETFPNTETNGEFGKRPAEDMEEEQAFKRSR) is disordered. The necessary for interaction with DDX1 stretch occupies residues 1–276 (METEQPEETF…GRGGRPMPPS (276 aa)). Basic and acidic residues predominate over residues 19–37 (FGKRPAEDMEEEQAFKRSR). Lys-34 is modified (N6-acetyllysine; alternate). A Glycyl lysine isopeptide (Lys-Gly) (interchain with G-Cter in SUMO1); alternate cross-link involves residue Lys-34. Lys-34 participates in a covalent cross-link: Glycyl lysine isopeptide (Lys-Gly) (interchain with G-Cter in SUMO2); alternate. Position 36 is a phosphoserine (Ser-36). Position 39 is a phosphothreonine (Thr-39). Residues 42 to 104 (MVELRILLQS…ETIGEILKKI (63 aa)) form the KH 1 domain. Glycyl lysine isopeptide (Lys-Gly) (interchain with G-Cter in SUMO2) cross-links involve residues Lys-52 and Lys-60. Repeat copies occupy residues 54–76 (AGAV…NASV) and 59–62 (GKGG). Residues 54–421 (AGAVIGKGGK…QIRHESGASI (368 aa)) are 2 X 22 AA approximate repeats. Residues 59 to 407 (GKGGKNIKAL…LAGSIIGKGG (349 aa)) form a 5 X 4 AA repeats of G-X-G-G region. A phosphoserine mark is found at Ser-75 and Ser-116. A KH 2 domain is found at 144 to 209 (DCELRLLIHQ…DRVVECIKII (66 aa)). Lys-163 participates in a covalent cross-link: Glycyl lysine isopeptide (Lys-Gly) (interchain with G-Cter in SUMO1); alternate. Residue Lys-163 forms a Glycyl lysine isopeptide (Lys-Gly) (interchain with G-Cter in SUMO2); alternate linkage. Lys-198 carries the post-translational modification N6-acetyllysine. The interaction with ZIK1 stretch occupies residues 209 to 337 (ILDLISESPI…RPGDRYDGMV (129 aa)). Phosphoserine occurs at positions 214 and 216. Lys-219 is covalently cross-linked (Glycyl lysine isopeptide (Lys-Gly) (interchain with G-Cter in SUMO2); alternate). Lys-219 is modified (N6-succinyllysine; alternate). The interval 236-273 (YGGFTMMFDDRRGRPVGFPMRGRGGFDRMPPGRGGRPM) is RNA-binding RGG-box. Tandem repeats lie at residues 245-250 (DRRGRP), 257-260 (GRGG), and 267-270 (GRGG). Positions 245–329 (DRRGRPVGFP…LMAYDRRGRP (85 aa)) are 2 X 6 AA repeats of D-R-R-G-R-P. Residues 250-329 (PVGFPMRGRG…LMAYDRRGRP (80 aa)) are disordered. Over residues 252-266 (GFPMRGRGGFDRMPP) the composition is skewed to low complexity. Positions 276-285 (SRRDYDDMSP) are enriched in basic and acidic residues. Ser-284 is subject to Phosphoserine. Residues 295–298 (GRGG) form a 3-4 repeat. Arg-316 is modified (omega-N-methylarginine). One copy of the 2-2 repeat lies at 324 to 329 (DRRGRP). Position 377 is an omega-N-methylarginine (Arg-377). Residue Ser-379 is modified to Phosphoserine. Residue Tyr-380 is modified to Phosphotyrosine. The KH 3 domain maps to 387-451 (IITTQVTIPK…DQIQNAQYLL (65 aa)). 2 consecutive repeat copies span residues 399–421 (AGSI…GASI) and 404–407 (GKGG). Lys-405 carries the post-translational modification N6-acetyllysine; alternate. Residue Lys-405 forms a Glycyl lysine isopeptide (Lys-Gly) (interchain with G-Cter in SUMO2); alternate linkage. Ser-420 bears the Phosphoserine mark. Residue Lys-422 forms a Glycyl lysine isopeptide (Lys-Gly) (interchain with G-Cter in SUMO1); alternate linkage. A Glycyl lysine isopeptide (Lys-Gly) (interchain with G-Cter in SUMO2); alternate cross-link involves residue Lys-422. A Glycyl lysine isopeptide (Lys-Gly) (interchain with G-Cter in SUMO); alternate cross-link involves residue Lys-422.

As to quaternary structure, identified in the spliceosome C complex. Interacts with ANKRD28, RBM42 and ZIK1. Interacts with DDX1. Interacts with MDM2; this interaction leads to ubiquitination and proteasomal degradation. Interacts with p53/TP53. Interacts with BRDT. Interacts with IVNS1ABP. Interacts with PPIA/CYPA. Part of a transcription inhibitory ribonucleoprotein complex composed at least of the circular RNA circZNF827, ZNF827 and HNRNPL. Sumoylated by CBX4. Sumoylation is increased upon DNA damage, such as that produced by doxorubicin, etoposide, UV light and camptothecin, due to enhanced CBX4 phosphorylation by HIPK2 under these conditions. In terms of processing, ubiquitinated by MDM2. Doxorubicin treatment does not affect monoubiquitination, but slightly decreases HNRNPK poly-ubiquitination. Post-translationally, O-glycosylated (O-GlcNAcylated), in a cell cycle-dependent manner.

It is found in the cytoplasm. The protein localises to the nucleus. Its subcellular location is the nucleoplasm. The protein resides in the cell projection. It localises to the podosome. Functionally, one of the major pre-mRNA-binding proteins. Binds tenaciously to poly(C) sequences. Likely to play a role in the nuclear metabolism of hnRNAs, particularly for pre-mRNAs that contain cytidine-rich sequences. Can also bind poly(C) single-stranded DNA. Plays an important role in p53/TP53 response to DNA damage, acting at the level of both transcription activation and repression. When sumoylated, acts as a transcriptional coactivator of p53/TP53, playing a role in p21/CDKN1A and 14-3-3 sigma/SFN induction. As far as transcription repression is concerned, acts by interacting with long intergenic RNA p21 (lincRNA-p21), a non-coding RNA induced by p53/TP53. This interaction is necessary for the induction of apoptosis, but not cell cycle arrest. As part of a ribonucleoprotein complex composed at least of ZNF827, HNRNPL and the circular RNA circZNF827 that nucleates the complex on chromatin, may negatively regulate the transcription of genes involved in neuronal differentiation. The chain is Heterogeneous nuclear ribonucleoprotein K (HNRNPK) from Oryctolagus cuniculus (Rabbit).